Here is a 210-residue protein sequence, read N- to C-terminus: Thiamine-phosphate synthase (210 aa).

4-amino-2-methyl-5-(diphosphooxymethyl)pyrimidine contacts are provided by residues 38-42 (QLREK) and Asn70. Mg(2+) is bound by residues Asp71 and Asp90. Ser109 contacts 4-amino-2-methyl-5-(diphosphooxymethyl)pyrimidine. 2-[(2R,5Z)-2-carboxy-4-methylthiazol-5(2H)-ylidene]ethyl phosphate is bound at residue 139–141 (TPT). Lys142 contacts 4-amino-2-methyl-5-(diphosphooxymethyl)pyrimidine. Residues Gly170 and 190-191 (VS) each bind 2-[(2R,5Z)-2-carboxy-4-methylthiazol-5(2H)-ylidene]ethyl phosphate.

It belongs to the thiamine-phosphate synthase family. Mg(2+) is required as a cofactor.

It catalyses the reaction 2-[(2R,5Z)-2-carboxy-4-methylthiazol-5(2H)-ylidene]ethyl phosphate + 4-amino-2-methyl-5-(diphosphooxymethyl)pyrimidine + 2 H(+) = thiamine phosphate + CO2 + diphosphate. The catalysed reaction is 2-(2-carboxy-4-methylthiazol-5-yl)ethyl phosphate + 4-amino-2-methyl-5-(diphosphooxymethyl)pyrimidine + 2 H(+) = thiamine phosphate + CO2 + diphosphate. The enzyme catalyses 4-methyl-5-(2-phosphooxyethyl)-thiazole + 4-amino-2-methyl-5-(diphosphooxymethyl)pyrimidine + H(+) = thiamine phosphate + diphosphate. The protein operates within cofactor biosynthesis; thiamine diphosphate biosynthesis; thiamine phosphate from 4-amino-2-methyl-5-diphosphomethylpyrimidine and 4-methyl-5-(2-phosphoethyl)-thiazole: step 1/1. Its function is as follows. Condenses 4-methyl-5-(beta-hydroxyethyl)thiazole monophosphate (THZ-P) and 2-methyl-4-amino-5-hydroxymethyl pyrimidine pyrophosphate (HMP-PP) to form thiamine monophosphate (TMP). This is Thiamine-phosphate synthase from Leptospira biflexa serovar Patoc (strain Patoc 1 / Ames).